The following is a 193-amino-acid chain: 3-isopropylmalate dehydratase small subunit (193 aa).

Belongs to the LeuD family. LeuD type 1 subfamily. Heterodimer of LeuC and LeuD.

It carries out the reaction (2R,3S)-3-isopropylmalate = (2S)-2-isopropylmalate. It participates in amino-acid biosynthesis; L-leucine biosynthesis; L-leucine from 3-methyl-2-oxobutanoate: step 2/4. Its function is as follows. Catalyzes the isomerization between 2-isopropylmalate and 3-isopropylmalate, via the formation of 2-isopropylmaleate. The protein is 3-isopropylmalate dehydratase small subunit of Listeria monocytogenes serovar 1/2a (strain ATCC BAA-679 / EGD-e).